A 427-amino-acid polypeptide reads, in one-letter code: Histidinol dehydrogenase (427 aa).

Positions 127, 187, and 210 each coordinate NAD(+). Positions 233, 255, and 258 each coordinate substrate. The Zn(2+) site is built by Gln255 and His258. Residues Glu323 and His324 each act as proton acceptor in the active site. Substrate-binding residues include His324, Asp357, Glu411, and His416. Asp357 contacts Zn(2+). Position 416 (His416) interacts with Zn(2+).

This sequence belongs to the histidinol dehydrogenase family. Zn(2+) serves as cofactor.

The catalysed reaction is L-histidinol + 2 NAD(+) + H2O = L-histidine + 2 NADH + 3 H(+). It functions in the pathway amino-acid biosynthesis; L-histidine biosynthesis; L-histidine from 5-phospho-alpha-D-ribose 1-diphosphate: step 9/9. Functionally, catalyzes the sequential NAD-dependent oxidations of L-histidinol to L-histidinaldehyde and then to L-histidine. This is Histidinol dehydrogenase from Streptococcus mutans serotype c (strain ATCC 700610 / UA159).